Here is a 158-residue protein sequence, read N- to C-terminus: 2-C-methyl-D-erythritol 2,4-cyclodiphosphate synthase (158 aa).

A divalent metal cation contacts are provided by Asp9 and His11. 4-CDP-2-C-methyl-D-erythritol 2-phosphate-binding positions include 9-11 (DVH) and 35-36 (HS). An a divalent metal cation-binding site is contributed by His43. Residues 57 to 59 (DIG), 62 to 66 (FPDTD), 101 to 107 (AQKPKML), 133 to 136 (TTTE), Phe140, and Arg143 contribute to the 4-CDP-2-C-methyl-D-erythritol 2-phosphate site.

The protein belongs to the IspF family. As to quaternary structure, homotrimer. The cofactor is a divalent metal cation.

The catalysed reaction is 4-CDP-2-C-methyl-D-erythritol 2-phosphate = 2-C-methyl-D-erythritol 2,4-cyclic diphosphate + CMP. The protein operates within isoprenoid biosynthesis; isopentenyl diphosphate biosynthesis via DXP pathway; isopentenyl diphosphate from 1-deoxy-D-xylulose 5-phosphate: step 4/6. Functionally, involved in the biosynthesis of isopentenyl diphosphate (IPP) and dimethylallyl diphosphate (DMAPP), two major building blocks of isoprenoid compounds. Catalyzes the conversion of 4-diphosphocytidyl-2-C-methyl-D-erythritol 2-phosphate (CDP-ME2P) to 2-C-methyl-D-erythritol 2,4-cyclodiphosphate (ME-CPP) with a corresponding release of cytidine 5-monophosphate (CMP). In Bacillus subtilis (strain 168), this protein is 2-C-methyl-D-erythritol 2,4-cyclodiphosphate synthase.